Reading from the N-terminus, the 558-residue chain is Inositol-3-phosphate synthase (558 aa).

Residues 1–34 (MSPTALDACDHHDSFSLPAQDQSKVHPSARRTPE) are disordered. The NAD(+) site is built by Gly-99, Gly-100, Asn-101, Asn-102, Asp-174, Ser-210, Ile-211, Gln-221, Arg-224, Thr-262, Ala-263, Asn-264, Thr-265, Gly-313, Ser-314, Asp-338, Ser-341, Asn-372, Asn-373, Asp-374, Lys-387, Gly-439, Asp-440, Asp-468, and Ser-469.

Belongs to the myo-inositol 1-phosphate synthase family. In terms of assembly, homotetramer. The cofactor is NAD(+).

The protein resides in the cytoplasm. It catalyses the reaction D-glucose 6-phosphate = 1D-myo-inositol 3-phosphate. Its pathway is polyol metabolism; myo-inositol biosynthesis; myo-inositol from D-glucose 6-phosphate: step 1/2. Its function is as follows. Key enzyme in myo-inositol biosynthesis pathway that catalyzes the conversion of glucose 6-phosphate to 1-myo-inositol 1-phosphate in a NAD-dependent manner. Rate-limiting enzyme in the synthesis of all inositol-containing compounds. The protein is Inositol-3-phosphate synthase of Cryptococcus neoformans var. grubii serotype A (strain H99 / ATCC 208821 / CBS 10515 / FGSC 9487) (Filobasidiella neoformans var. grubii).